The sequence spans 184 residues: Large ribosomal subunit protein bL17 (184 aa).

The disordered stretch occupies residues Thr-126–Lys-184. The segment covering Ala-141–Thr-161 has biased composition (acidic residues).

It belongs to the bacterial ribosomal protein bL17 family. In terms of assembly, part of the 50S ribosomal subunit. Contacts protein L32.

This is Large ribosomal subunit protein bL17 from Corynebacterium efficiens (strain DSM 44549 / YS-314 / AJ 12310 / JCM 11189 / NBRC 100395).